Consider the following 420-residue polypeptide: Probable glycosyltransferase YdaM (420 aa).

The next 4 helical transmembrane spans lie at 4-24 (TLFFISLSLIWVMLLYHMFLM), 299-319 (IIFDLFYFFFTYFLFFFGVIM), 332-352 (LHLSVGFLAMILWILAFFLFM), and 371-391 (FFIVFLMYFTYSQAWIVLVIY).

This sequence belongs to the glycosyltransferase 2 family.

It localises to the cell membrane. The chain is Probable glycosyltransferase YdaM (ydaM) from Bacillus subtilis (strain 168).